The chain runs to 212 residues: MLYFESLKDKFALNEKQLNKFVFYYEFLKQENQKMNLTSIISLSDVCYKHFYDSLILKEIFNFNTVTNLCDVDSGAGFPSFPLKILFPHLKIVIIESSLKKINFLKQLSSHLELDNICFFHQRVEQYDIAKNGSYDCVVARALARLELILKWCVPLVKKKGYFIAMKGKNFQQELEASKKIIKQIRVKLVSAKTLELPMQLGTRTNLLFQNE.

S-adenosyl-L-methionine is bound by residues Phe78, 96–98 (ESS), 124–125 (VE), and Arg141.

It belongs to the methyltransferase superfamily. RNA methyltransferase RsmG family.

It is found in the cytoplasm. Its function is as follows. Specifically methylates the N7 position of a guanine in 16S rRNA. This Onion yellows phytoplasma (strain OY-M) protein is Ribosomal RNA small subunit methyltransferase G.